A 1220-amino-acid polypeptide reads, in one-letter code: DNA polymerase catalytic subunit (1220 aa).

Disordered stretches follow at residues 21-43 (GKRPFFRPGSGQTAETERPRPPQ) and 641-691 (QADA…KPGV). The segment covering 646–660 (SETSELAMDSQSHAF) has biased composition (polar residues).

The protein belongs to the DNA polymerase type-B family. Forms a complex with the ssDNA-binding protein, the DNA polymerase processivity factor, and the alkaline exonuclease. Interacts with the helicase-primase complex composed of the primase, the helicase and the primase-associated factor; this interaction may coordinate leading and lagging strand DNA synthesis at the replication fork.

The protein resides in the host nucleus. It carries out the reaction DNA(n) + a 2'-deoxyribonucleoside 5'-triphosphate = DNA(n+1) + diphosphate. The enzyme catalyses Endonucleolytic cleavage to 5'-phosphomonoester.. Replicates viral genomic DNA. The replication complex is composed of six viral proteins: the DNA polymerase, processivity factor, primase, primase-associated factor, helicase, and ssDNA-binding protein. Additionally, the polymerase contains an intrinsic ribonuclease H (RNase H) activity that specifically degrades RNA/DNA heteroduplexes or duplex DNA substrates in the 5' to 3' direction. Therefore, it can catalyze the excision of the RNA primers that initiate the synthesis of Okazaki fragments at a replication fork during viral DNA replication. This chain is DNA polymerase catalytic subunit, found in Equus caballus (Horse).